An 818-amino-acid polypeptide reads, in one-letter code: Fibrous sheath CABYR-binding protein (818 aa).

The interval 1–61 is disordered; it reads MEEKDESEQS…PKAALSIGNI (61 aa). Serine 25, serine 57, and serine 182 each carry phosphoserine. Disordered regions lie at residues 195 to 727 and 773 to 805; these read SFSK…PFIT and LESGNLDDKPKSEEPLERDTIPKDSSGTKNEGV. 3 stretches are compositionally biased toward low complexity: residues 490-511, 544-560, and 697-715; these read SPPAEEVPAGEPPEVQSPPAEE, EAPAGEPSEVQSPPAEE, and AELQPPSTEETTSEMVSVE. Residues 773–794 show a composition bias toward basic and acidic residues; sequence LESGNLDDKPKSEEPLERDTIP.

Interacts with CABYR. Interacts with ROPN1 and ROPN1L; the interaction increases upon spermatozoa capacitation conditions. Post-translationally, phosphorylated by PKA upon spermatozoa capacitation conditions.

The protein localises to the cell projection. Its subcellular location is the cilium. It is found in the flagellum. In terms of biological role, may be involved in the later stages of fibrous sheath biogenesis and spermatozoa capacitation. Inhibits ROPN1 and ROPN1L SUMOylation. Binds calcium. This Bos taurus (Bovine) protein is Fibrous sheath CABYR-binding protein.